A 380-amino-acid chain; its full sequence is Cytochrome b (380 aa).

4 consecutive transmembrane segments (helical) span residues 34–54 (FGSL…LLAM), 78–99 (WLIR…FLHI), 114–134 (WNTG…GYVL), and 179–199 (FFAL…IHLI). The heme b site is built by His-84 and His-98. Residues His-183 and His-197 each coordinate heme b. Position 202 (His-202) interacts with a ubiquinone. Transmembrane regions (helical) follow at residues 227-247 (LKDI…ALFS), 289-309 (LGGV…PFLH), 321-341 (LSQT…WVGS), and 348-368 (FIII…ILFP).

It belongs to the cytochrome b family. As to quaternary structure, the cytochrome bc1 complex contains 11 subunits: 3 respiratory subunits (MT-CYB, CYC1 and UQCRFS1), 2 core proteins (UQCRC1 and UQCRC2) and 6 low-molecular weight proteins (UQCRH/QCR6, UQCRB/QCR7, UQCRQ/QCR8, UQCR10/QCR9, UQCR11/QCR10 and a cleavage product of UQCRFS1). This cytochrome bc1 complex then forms a dimer. It depends on heme b as a cofactor.

It is found in the mitochondrion inner membrane. Functionally, component of the ubiquinol-cytochrome c reductase complex (complex III or cytochrome b-c1 complex) that is part of the mitochondrial respiratory chain. The b-c1 complex mediates electron transfer from ubiquinol to cytochrome c. Contributes to the generation of a proton gradient across the mitochondrial membrane that is then used for ATP synthesis. The sequence is that of Cytochrome b (MT-CYB) from Tragopan temminckii (Temminck's tragopan).